The chain runs to 204 residues: Imidazoleglycerol-phosphate dehydratase (204 aa).

The interval 183 to 204 is disordered; that stretch reads DPRMDGITPSTKGTLSESGDSQ. Residues 190 to 204 are compositionally biased toward polar residues; it reads TPSTKGTLSESGDSQ.

The protein belongs to the imidazoleglycerol-phosphate dehydratase family.

The protein localises to the cytoplasm. It carries out the reaction D-erythro-1-(imidazol-4-yl)glycerol 3-phosphate = 3-(imidazol-4-yl)-2-oxopropyl phosphate + H2O. It functions in the pathway amino-acid biosynthesis; L-histidine biosynthesis; L-histidine from 5-phospho-alpha-D-ribose 1-diphosphate: step 6/9. The polypeptide is Imidazoleglycerol-phosphate dehydratase (Alcanivorax borkumensis (strain ATCC 700651 / DSM 11573 / NCIMB 13689 / SK2)).